The sequence spans 293 residues: Porphobilinogen deaminase (293 aa).

The residue at position 235 (C235) is an S-(dipyrrolylmethanemethyl)cysteine.

It belongs to the HMBS family. Monomer. Requires dipyrromethane as cofactor.

The catalysed reaction is 4 porphobilinogen + H2O = hydroxymethylbilane + 4 NH4(+). Its pathway is porphyrin-containing compound metabolism; protoporphyrin-IX biosynthesis; coproporphyrinogen-III from 5-aminolevulinate: step 2/4. Tetrapolymerization of the monopyrrole PBG into the hydroxymethylbilane pre-uroporphyrinogen in several discrete steps. The chain is Porphobilinogen deaminase from Ruminiclostridium cellulolyticum (strain ATCC 35319 / DSM 5812 / JCM 6584 / H10) (Clostridium cellulolyticum).